An 806-amino-acid chain; its full sequence is Glycerol-3-phosphate acyltransferase (806 aa).

An HXXXXD motif motif is present at residues 305 to 310; it reads CHRSHM.

This sequence belongs to the GPAT/DAPAT family.

It localises to the cell inner membrane. The enzyme catalyses sn-glycerol 3-phosphate + an acyl-CoA = a 1-acyl-sn-glycero-3-phosphate + CoA. The protein operates within phospholipid metabolism; CDP-diacylglycerol biosynthesis; CDP-diacylglycerol from sn-glycerol 3-phosphate: step 1/3. The protein is Glycerol-3-phosphate acyltransferase of Salmonella paratyphi B (strain ATCC BAA-1250 / SPB7).